Reading from the N-terminus, the 241-residue chain is MTALPAASITSSAFDDLDALNAQLEGLRADQRVAWALQHGPQNAALSSSFGAQSAVTLHLLSQQRPDIPVILIDTGYLFPETYRFADALTERLKLNLKVYRPLVSRAWMEARHGRLWEQGMVGIDQYNNLRKVEPMRRALNELDVGTWFTGLRRSQSGGRAQTPIMQKRGERYKISPIADWTDRDVWQYLQAHDLPYHPLWEQGYVSIGDFHTTRRWEPGMREEDTRFYGLKRECGIHEDI.

Cys235 serves as the catalytic Nucleophile; cysteine thiosulfonate intermediate.

The protein belongs to the PAPS reductase family. CysH subfamily.

The protein localises to the cytoplasm. The enzyme catalyses [thioredoxin]-disulfide + sulfite + adenosine 3',5'-bisphosphate + 2 H(+) = [thioredoxin]-dithiol + 3'-phosphoadenylyl sulfate. The protein operates within sulfur metabolism; hydrogen sulfide biosynthesis; sulfite from sulfate: step 3/3. In terms of biological role, catalyzes the formation of sulfite from phosphoadenosine 5'-phosphosulfate (PAPS) using thioredoxin as an electron donor. This Xanthomonas axonopodis pv. citri (strain 306) protein is Phosphoadenosine 5'-phosphosulfate reductase.